The primary structure comprises 371 residues: tRNA-specific 2-thiouridylase MnmA (371 aa).

ATP is bound by residues 12–19 (GMSGGVDS) and Met38. The interval 98 to 100 (NPD) is interaction with target base in tRNA. Cys103 acts as the Nucleophile in catalysis. Cys103 and Cys200 are disulfide-bonded. Gly127 serves as a coordination point for ATP. Residues 150 to 152 (KDQ) are interaction with tRNA. The active-site Cysteine persulfide intermediate is the Cys200. The tract at residues 308–309 (RY) is interaction with tRNA.

This sequence belongs to the MnmA/TRMU family.

The protein resides in the cytoplasm. The enzyme catalyses S-sulfanyl-L-cysteinyl-[protein] + uridine(34) in tRNA + AH2 + ATP = 2-thiouridine(34) in tRNA + L-cysteinyl-[protein] + A + AMP + diphosphate + H(+). In terms of biological role, catalyzes the 2-thiolation of uridine at the wobble position (U34) of tRNA, leading to the formation of s(2)U34. This is tRNA-specific 2-thiouridylase MnmA from Oceanobacillus iheyensis (strain DSM 14371 / CIP 107618 / JCM 11309 / KCTC 3954 / HTE831).